Consider the following 503-residue polypeptide: Aspartyl/glutamyl-tRNA(Asn/Gln) amidotransferase subunit B (503 aa).

It belongs to the GatB/GatE family. GatB subfamily. As to quaternary structure, heterotrimer of A, B and C subunits.

The enzyme catalyses L-glutamyl-tRNA(Gln) + L-glutamine + ATP + H2O = L-glutaminyl-tRNA(Gln) + L-glutamate + ADP + phosphate + H(+). It catalyses the reaction L-aspartyl-tRNA(Asn) + L-glutamine + ATP + H2O = L-asparaginyl-tRNA(Asn) + L-glutamate + ADP + phosphate + 2 H(+). Allows the formation of correctly charged Asn-tRNA(Asn) or Gln-tRNA(Gln) through the transamidation of misacylated Asp-tRNA(Asn) or Glu-tRNA(Gln) in organisms which lack either or both of asparaginyl-tRNA or glutaminyl-tRNA synthetases. The reaction takes place in the presence of glutamine and ATP through an activated phospho-Asp-tRNA(Asn) or phospho-Glu-tRNA(Gln). The protein is Aspartyl/glutamyl-tRNA(Asn/Gln) amidotransferase subunit B of Cereibacter sphaeroides (strain ATCC 17025 / ATH 2.4.3) (Rhodobacter sphaeroides).